A 71-amino-acid chain; its full sequence is Small ribosomal subunit protein bS21B (71 aa).

It belongs to the bacterial ribosomal protein bS21 family.

This Rhizobium johnstonii (strain DSM 114642 / LMG 32736 / 3841) (Rhizobium leguminosarum bv. viciae) protein is Small ribosomal subunit protein bS21B.